The following is a 66-amino-acid chain: Ribosome biogenesis protein Nop10 (66 aa).

It belongs to the NOP10 family.

Functionally, involved in ribosome biogenesis; more specifically in 18S rRNA pseudouridylation and in cleavage of pre-rRNA. The protein is Ribosome biogenesis protein Nop10 of Staphylothermus marinus (strain ATCC 43588 / DSM 3639 / JCM 9404 / F1).